Reading from the N-terminus, the 346-residue chain is Holliday junction branch migration complex subunit RuvB (346 aa).

A large ATPase domain (RuvB-L) region spans residues 1 to 182 (MTRVISGEPQ…FGIPIRLEFY (182 aa)). Residues L21, R22, G63, K66, T67, T68, R172, Y182, and R219 each coordinate ATP. T67 contributes to the Mg(2+) binding site. Residues 183–253 (TPAELRHVLQ…AAAMALARLE (71 aa)) are small ATPAse domain (RuvB-S). Residues 256–346 (ESGLDSLDRR…QAQGALFDEG (91 aa)) form a head domain (RuvB-H) region. Residues R292, R311, and R316 each contribute to the DNA site.

The protein belongs to the RuvB family. In terms of assembly, homohexamer. Forms an RuvA(8)-RuvB(12)-Holliday junction (HJ) complex. HJ DNA is sandwiched between 2 RuvA tetramers; dsDNA enters through RuvA and exits via RuvB. An RuvB hexamer assembles on each DNA strand where it exits the tetramer. Each RuvB hexamer is contacted by two RuvA subunits (via domain III) on 2 adjacent RuvB subunits; this complex drives branch migration. In the full resolvosome a probable DNA-RuvA(4)-RuvB(12)-RuvC(2) complex forms which resolves the HJ.

It is found in the cytoplasm. The enzyme catalyses ATP + H2O = ADP + phosphate + H(+). The RuvA-RuvB-RuvC complex processes Holliday junction (HJ) DNA during genetic recombination and DNA repair, while the RuvA-RuvB complex plays an important role in the rescue of blocked DNA replication forks via replication fork reversal (RFR). RuvA specifically binds to HJ cruciform DNA, conferring on it an open structure. The RuvB hexamer acts as an ATP-dependent pump, pulling dsDNA into and through the RuvAB complex. RuvB forms 2 homohexamers on either side of HJ DNA bound by 1 or 2 RuvA tetramers; 4 subunits per hexamer contact DNA at a time. Coordinated motions by a converter formed by DNA-disengaged RuvB subunits stimulates ATP hydrolysis and nucleotide exchange. Immobilization of the converter enables RuvB to convert the ATP-contained energy into a lever motion, pulling 2 nucleotides of DNA out of the RuvA tetramer per ATP hydrolyzed, thus driving DNA branch migration. The RuvB motors rotate together with the DNA substrate, which together with the progressing nucleotide cycle form the mechanistic basis for DNA recombination by continuous HJ branch migration. Branch migration allows RuvC to scan DNA until it finds its consensus sequence, where it cleaves and resolves cruciform DNA. This chain is Holliday junction branch migration complex subunit RuvB, found in Caulobacter vibrioides (strain ATCC 19089 / CIP 103742 / CB 15) (Caulobacter crescentus).